The following is a 126-amino-acid chain: Protein ApaG (126 aa).

An ApaG domain is found at 2 to 126 (NQRLSPIKVE…FSLAVPGLLH (125 aa)).

In Shewanella piezotolerans (strain WP3 / JCM 13877), this protein is Protein ApaG.